Consider the following 228-residue polypeptide: Ureidoacrylate amidohydrolase RutB (228 aa).

The Proton acceptor role is filled by Asp-23. Lys-132 is a catalytic residue. The active-site Nucleophile is the Cys-165.

Belongs to the isochorismatase family. RutB subfamily.

It catalyses the reaction (Z)-3-ureidoacrylate + H2O + H(+) = (Z)-3-aminoacrylate + NH4(+) + CO2. It carries out the reaction (Z)-3-ureidoacrylate + H2O = (Z)-3-aminoacrylate + carbamate + H(+). The catalysed reaction is (Z)-2-methylureidoacrylate + H2O + H(+) = (Z)-2-methylaminoacrylate + NH4(+) + CO2. Functionally, hydrolyzes ureidoacrylate to form aminoacrylate and carbamate. The carbamate hydrolyzes spontaneously, thereby releasing one of the nitrogen atoms of the pyrimidine ring as ammonia and one of its carbon atoms as CO2. This chain is Ureidoacrylate amidohydrolase RutB, found in Agrobacterium fabrum (strain C58 / ATCC 33970) (Agrobacterium tumefaciens (strain C58)).